We begin with the raw amino-acid sequence, 587 residues long: Pentatricopeptide repeat-containing protein OGR1, mitochondrial (587 aa).

Residues 1–30 (MSVSAAARHLESLLPRLASLRHYLQFHARL) constitute a mitochondrion transit peptide. PPR repeat units lie at residues 145–179 (DVRL…DVAT), 200–203 (FHRL), 217–251 (NEVT…GLDR), 252–286 (NVRV…DQTL), 287–315 (VSYN…MPTR), 319–349 (DGVT…MRVA), 351–381 (NMKH…MPFP), and 383–417 (DIVL…GSNV). The segment at 386–461 (LWQTLLGAAK…VPGFSYTEID (76 aa)) is type E motif. A type E(+) motif region spans residues 462 to 492 (GVMHKFINGDKEHPRWQEIYRALEDIVSRIS). Positions 493-587 (ELGYEPETSN…DGQCSCRDYW (95 aa)) are type DYW motif.

Its subcellular location is the mitochondrion. Involved in multiple sites RNA editing events in mitochondria. Essential for C-to-U RNA editing at seven specific sites of nad2, nad4, cox2, cox3 and ccmC transcripts, all coding for proteins involved in the mitochondrial electron transport chain coupled to ATP generation. Required for normal growth and development. This is Pentatricopeptide repeat-containing protein OGR1, mitochondrial from Oryza sativa subsp. japonica (Rice).